A 484-amino-acid chain; its full sequence is Cytochrome P450 monooxygenase poxD (484 aa).

The helical transmembrane segment at 2–24 (VSPVVLATTAMIVVFLLAQRYLS) threads the bilayer. Cysteine 429 is a heme binding site.

It belongs to the cytochrome P450 family. It depends on heme as a cofactor.

It is found in the membrane. Its pathway is secondary metabolite biosynthesis. Its function is as follows. Cytochrome P450 monooxygenase; part of the gene cluster that mediates the biosynthesis of oxaleimides, cytotoxic compounds containing an unusual disubstituted succinimide moiety. The first step of the pathway is provided by the HR-PKS poxF that serves in a new mode of collaborative biosynthesis with the PKS-NRPS poxE, by providing the olefin containing amino acid substrate via the synthesis of an ACP-bound dec-4-enoate. The cytochrome P450 monooxygenase poxM-catalyzed oxidation at the alpha-position creates the enzyme-bound 2-hydroxydec-4-enoyl-ACP thioester, which may be prone to spontaneous hydrolysis to yield 2-hydroxydec-4-enoic acid due to increased electrophilicity of the carbonyl. 2-hydroxydec-4-enoic acid can then be further oxidized by poxM to yield the alpha-ketoacid 2-oxodec-4-enoicacid, which is reductively aminated by the aminotransferase poxL to yield (S,E)-2-aminodec-4-enoic acid. The Hybrid PKS-NRPS synthetase poxE then performs condensation between the octaketide product of its PKS modules and the amino group of (S,E)-2-aminodec-4-enoic acid which is activated and incorporated by the adenylation domain. The resulting aminoacyl product can be cyclized by the Diels-Alderase PoxQ and reductively released by the reductive (R) domain of poxE to yield an aldehyde intermediate. The released aldehyde is then substrate for a Knoevenagel condensation by the hydrolyase poxO followed by an oxidation at the 5-position of the pyrrolidone ring. The presence of the olefin from the amino acid building block allows for migration of the substituted allyl group to occur. This allylic transposition reaction takes place in a conjugate addition, semipinacol-like fashion to yield a succinimide intermediate. Iterative two-electron oxidations of the C7 methyl of the succinimide intermediate to the carboxylic acid can be catalyzed by one of two remaining cytochrome P450 monooxygenasess poxC or poxD to yield oxaleimide A. Subsequent oxidation yields the maleimide scaffold oxaleimide I. Both oxaleimide A and oxaleimide I can undergo oxidative modifications in the decalin ring to yield the series of products oxaleimides B to H. This is Cytochrome P450 monooxygenase poxD from Penicillium oxalicum.